We begin with the raw amino-acid sequence, 352 residues long: MVKGLELFEVPRQVVFGPNAIGKVSEVLTYLGLRRGLIITGHIHSRHIASKVSEQCVDCQIISDDEIELSDVVKGMSAFSDVDFIAGVGGGRVIDVSKVIAYKLNKHLISIPTVASHDGIASPYISFLMQDDLNKLGVGKVRKTPLAIIVDTGIVAEAPRVFLLAGIGELLGKKVALMDWRLGHRIKGEDYSESAAMLALSSHMIIMNNVNKLTRHGEEETRIVVKALLGCGVAMAIAGSTRPCSGSEHLFSHSLDLLAREYGVKQAMHGMQVALSSVIMLYLHGANWRRIIKIMKMLGLPTSFKELGYDKELVVEALMNAHRIRPDRYTILGSNGLTREAAEAALEQTGVI.

NAD(+) contacts are provided by residues Gly-91 to Asp-95 and Thr-113 to Ser-116. Residue Asp-118 coordinates substrate. Ser-122 serves as a coordination point for NAD(+). Substrate is bound at residue Glu-169. Positions 169 and 249 each coordinate Zn(2+). His-253 contributes to the substrate binding site. Residue His-269 participates in Zn(2+) binding.

It belongs to the glycerol-1-phosphate dehydrogenase family. Homodimer. Requires Zn(2+) as cofactor.

Its subcellular location is the cytoplasm. The enzyme catalyses sn-glycerol 1-phosphate + NAD(+) = dihydroxyacetone phosphate + NADH + H(+). The catalysed reaction is sn-glycerol 1-phosphate + NADP(+) = dihydroxyacetone phosphate + NADPH + H(+). Its pathway is membrane lipid metabolism; glycerophospholipid metabolism. In terms of biological role, catalyzes the NAD(P)H-dependent reduction of dihydroxyacetonephosphate (DHAP or glycerone phosphate) to glycerol 1-phosphate (G1P). The G1P thus generated is used as the glycerophosphate backbone of phospholipids in the cellular membranes of Archaea. This Caldivirga maquilingensis (strain ATCC 700844 / DSM 13496 / JCM 10307 / IC-167) protein is Glycerol-1-phosphate dehydrogenase [NAD(P)+].